We begin with the raw amino-acid sequence, 369 residues long: Anhydro-N-acetylmuramic acid kinase (369 aa).

12–19 (GTSLDGVD) contacts ATP.

This sequence belongs to the anhydro-N-acetylmuramic acid kinase family.

It catalyses the reaction 1,6-anhydro-N-acetyl-beta-muramate + ATP + H2O = N-acetyl-D-muramate 6-phosphate + ADP + H(+). The protein operates within amino-sugar metabolism; 1,6-anhydro-N-acetylmuramate degradation. It participates in cell wall biogenesis; peptidoglycan recycling. Functionally, catalyzes the specific phosphorylation of 1,6-anhydro-N-acetylmuramic acid (anhMurNAc) with the simultaneous cleavage of the 1,6-anhydro ring, generating MurNAc-6-P. Is required for the utilization of anhMurNAc either imported from the medium or derived from its own cell wall murein, and thus plays a role in cell wall recycling. The protein is Anhydro-N-acetylmuramic acid kinase of Escherichia coli (strain SE11).